Reading from the N-terminus, the 312-residue chain is Urease accessory protein UreD (312 aa).

Basic and acidic residues predominate over residues 1-15 (MLAEQFTDKNKHAEQ). The interval 1–24 (MLAEQFTDKNKHAEQELSPGSSAV) is disordered.

This sequence belongs to the UreD family. As to quaternary structure, ureD, UreF and UreG form a complex that acts as a GTP-hydrolysis-dependent molecular chaperone, activating the urease apoprotein by helping to assemble the nickel containing metallocenter of UreC. The UreE protein probably delivers the nickel.

Its subcellular location is the cytoplasm. In terms of biological role, required for maturation of urease via the functional incorporation of the urease nickel metallocenter. The sequence is that of Urease accessory protein UreD from Hahella chejuensis (strain KCTC 2396).